The sequence spans 354 residues: Membrane progestin receptor beta (354 aa).

Topologically, residues 1 to 76 (MTTAILERLS…FSLFQKHNEV (76 aa)) are cytoplasmic. The helical transmembrane segment at 77–97 (VNVWTHLLAALAVLLRFWAFV) threads the bilayer. The Extracellular segment spans residues 98-111 (EAGALQWASPHTLP). A helical transmembrane segment spans residues 112–132 (LLLFILSSITYLTCSLLAHLL). Residues 133 to 173 (QSKSELSHYTFYFVDYVGVSVYQYGSALAHFFYSSDQAWYE) lie on the Cytoplasmic side of the membrane. The helical transmembrane segment at 174–194 (LFWIFFLPAAAFCGWLSCAGC) threads the bilayer. The Extracellular segment spans residues 195-213 (CYAKYRYRRPYPVMRKICQ). A helical membrane pass occupies residues 214-234 (VVPAGLAFVLDISPVAHRVAL). The Cytoplasmic portion of the chain corresponds to 235 to 243 (CHLAGCQEQ). A helical transmembrane segment spans residues 244–264 (AAWYHTLQILFFLVSAYFFSC). The Extracellular segment spans residues 265-283 (PVPEKYFPGSCDIVGHGHQ). Residues 284-304 (IFHAFLSVCTLSQLEAILLDY) form a helical membrane-spanning segment. Residues 305-315 (QGRHEIFLQRH) are Cytoplasmic-facing. The helical transmembrane segment at 316 to 336 (GPLSVYSACLSFFVLAACSAA) threads the bilayer. Residues 337–354 (TATLLRHKVKDRLIKKDS) lie on the Extracellular side of the membrane.

Belongs to the ADIPOR family. Expressed in brain and testis.

The protein resides in the cell membrane. Its function is as follows. Plasma membrane progesterone (P4) receptor coupled to G proteins. Seems to act through a G(i) mediated pathway. May be involved in oocyte maturation. Also binds dehydroepiandrosterone (DHEA), pregnanolone, pregnenolone and allopregnanolone. In Mus musculus (Mouse), this protein is Membrane progestin receptor beta.